The sequence spans 494 residues: Metal cation symporter ZIP14 (494 aa).

The signal sequence occupies residues 1–34 (MTLRRASGCRQLTLTIGLALTLGLLQWPIGDVRG). Over 35–152 (QDGASPAQVL…PTEAEVWGYG (118 aa)) the chain is Extracellular. A helical membrane pass occupies residues 153–173 (LLCVTVISLCSLVGASVVPFM). The Cytoplasmic segment spans residues 174–181 (RKTFYKRL). A helical transmembrane segment spans residues 182–202 (LLYFIALAIGTLYSNALFQLI). Residues 203-219 (PEAFGFDPMEDYYVPKS) lie on the Extracellular side of the membrane. A helical membrane pass occupies residues 220–240 (AVVFGGFYLFFFTEKILKMIL). At 241 to 397 (KPKDTGGHGH…LLNAGMSIQQ (157 aa)) the chain is on the cytoplasmic side. The HHHGHXHX-motif signature appears at 248–255 (HGHGHSHF). Residues 376–381 (EEFPHE) carry the XEXPHE-motif motif. The chain crosses the membrane as a helical span at residues 398–418 (ALFFNFLSACCCYLGMGFGIL). Residues 419 to 426 (AGNNFSPN) lie on the Extracellular side of the membrane. The chain crosses the membrane as a helical span at residues 427-447 (WIFALAGGMFLYIALADMFPE). Residues 448–462 (MNEVSREEEEAGGSG) are Cytoplasmic-facing. Residues 463–483 (FLLTFALQNAGLLTGFAIMLV) traverse the membrane as a helical segment. At 484–494 (LTIYSGQIQLG) the chain is on the extracellular side.

This sequence belongs to the ZIP transporter (TC 2.A.5) family. As to quaternary structure, homotrimer.

The protein localises to the cell membrane. It is found in the apical cell membrane. The protein resides in the basolateral cell membrane. It localises to the early endosome membrane. Its subcellular location is the late endosome membrane. The protein localises to the lysosome membrane. The catalysed reaction is Zn(2+)(out) + 2 hydrogencarbonate(out) = Zn(2+)(in) + 2 hydrogencarbonate(in). It catalyses the reaction Mn(2+)(out) + 2 hydrogencarbonate(out) = Mn(2+)(in) + 2 hydrogencarbonate(in). The enzyme catalyses Fe(2+)(out) + 2 hydrogencarbonate(out) = Fe(2+)(in) + 2 hydrogencarbonate(in). It carries out the reaction Cd(2+)(out) + 2 hydrogencarbonate(out) = Cd(2+)(in) + 2 hydrogencarbonate(in). Functionally, broad-scope metal ion transporter with a preference for zinc uptake. Also mediates cellular uptake of nontransferrin-bound iron. Its function is as follows. Electroneutral transporter of the plasma membrane mediating the cellular uptake of the divalent metal cations zinc, manganese and iron that are important for tissue homeostasis, metabolism, development and immunity. Functions as an energy-dependent symporter, transporting through the membranes an electroneutral complex composed of a divalent metal cation and two bicarbonate anions. Beside these endogenous cellular substrates, can also import cadmium a non-essential metal which is cytotoxic and carcinogenic. This chain is Metal cation symporter ZIP14, found in Danio rerio (Zebrafish).